The sequence spans 299 residues: Caspase-1 (299 aa).

The propeptide occupies 1 to 28 (MLDGKQDNGNVDSVDIKQRTNGGGDEGD). Positions 1–45 (MLDGKQDNGNVDSVDIKQRTNGGGDEGDALGSNSSSQPNRVARMP) are disordered. Active-site residues include His136 and Cys178. A propeptide spanning residues 185–195 (GGITLSRTETD) is cleaved from the precursor.

The protein belongs to the peptidase C14A family. In terms of assembly, heterotetramer that consists of two anti-parallel arranged heterodimers, each one formed by a 19/18 kDa (p19/18) and a 12 kDa (p12) subunit. The two subunits are derived from the precursor sequence by an autocatalytic mechanism.

Functionally, involved in the activation cascade of caspases responsible for apoptosis execution. Inhibited by the baculovirus anti-apoptotic protein p35. Cleaves p35 and nuclear immunophilin FKBP46. The protein is Caspase-1 of Spodoptera frugiperda (Fall armyworm).